Consider the following 1535-residue polypeptide: CLIP-associating protein 1 (1535 aa).

2 HEAT repeats span residues 87–124 (AQIG…QAAN) and 163–200 (LTLS…HVGE). The segment at 237 to 290 (NEKNFDDEDSVDGNRPSSASSSSSKAPSSSRRNVNLGTTRRLMSSSLGSKSSAA) is disordered. Ser246 carries the post-translational modification Phosphoserine. Residues 252–266 (PSSASSSSSKAPSSS) are compositionally biased toward low complexity. Over residues 267–279 (RRNVNLGTTRRLM) the composition is skewed to polar residues. Low complexity predominate over residues 280 to 290 (SSSLGSKSSAA). 2 HEAT repeats span residues 405–440 (HGAE…IRHT) and 441–477 (HIPR…EWQT). Disordered stretches follow at residues 543-600 (SDSI…RSRS) and 612-782 (SKVS…GRIP). Phosphoserine occurs at positions 545, 548, 558, 559, and 568. The segment covering 548–567 (SLPQSDRSSSSSQESLNRPL) has biased composition (low complexity). Residues 579–594 (SRGSTVSTKSVSTTGS) are compositionally biased toward low complexity. Ser600 is modified (phosphoserine). Low complexity predominate over residues 612–633 (SKVSSSSGSPAFSSAAALPPGS). 4 positions are modified to phosphoserine: Ser636, Ser646, Ser647, and Ser649. A compositionally biased stretch (polar residues) spans 645-658 (QSSGSTTNVASTPD). Position 656 is a phosphothreonine (Thr656). The segment at 662–782 (RSRAKVVSQS…FGLGQSGRIP (121 aa)) is interaction with microtubules, MAPRE1 and MAPRE3. Residues 673–695 (RSRSANPAGAGSRSSSPGKLLGS) are compositionally biased toward low complexity. Phosphoserine is present on residues Ser684, Ser688, Ser695, and Ser702. Thr708 is subject to Phosphothreonine. Residue Ser711 is modified to Phosphoserine. Over residues 721 to 730 (QGCSRETSPN) the composition is skewed to polar residues. Phosphoserine occurs at positions 784, 794, and 820. An HEAT 5 repeat occupies 971–1008 (QQFNILMRFIVDQTQTPNLKVKVAILKYIESLARQMDP). A disordered region spans residues 1078 to 1157 (LKNSSNTGVG…APSHKTLRRS (80 aa)). The span at 1079–1094 (KNSSNTGVGSPSNTIG) shows a compositional bias: polar residues. Phosphoserine is present on Ser1088. Phosphothreonine occurs at positions 1092 and 1096. Low complexity predominate over residues 1103–1112 (SRTSPLTSPT). Residues Ser1110, Phe1139, and Ser1193 each carry the phosphoserine modification. The span at 1200–1213 (PIKRDGKKDCDIVS) shows a compositional bias: basic and acidic residues. 2 disordered regions span residues 1200-1233 (PIKR…EIEG) and 1245-1266 (LNTQ…PYPY). Ser1220 is modified (phosphoserine). An interaction with CLIP2 and RSN region spans residues 1251–1535 (RAFPGPRARE…SSSSDVSTHS (285 aa)). The interaction with PHLDB2 stretch occupies residues 1251 to 1535 (RAFPGPRARE…SSSSDVSTHS (285 aa)). The interval 1253 to 1535 (FPGPRAREYN…SSSSDVSTHS (283 aa)) is localization to kinetochores. A coiled-coil region spans residues 1296-1327 (DHSDLVADLLKELSNHNERVEERKGALLELLK). HEAT repeat units follow at residues 1339–1376 (EHFK…NQPA) and 1457–1494 (QLLV…VIGE).

It belongs to the CLASP family. As to quaternary structure, interacts with ERC1, MAPRE1, MAPRE3, microtubules, and PHLDB2. The interaction with ERC1 may be mediated by PHLDB2. Interacts with GCC2; recruits CLASP1 to Golgi membranes. Interacts with CLIP2 and RSN. Interacts with MACF1. Interacts with mtcl2 and MTCL1. In terms of tissue distribution, highly expressed in brain and heart and at lower levels in kidney, lung, skeletal muscle and testis.

Its subcellular location is the cytoplasm. It localises to the cytoskeleton. The protein resides in the microtubule organizing center. It is found in the centrosome. The protein localises to the chromosome. Its subcellular location is the centromere. It localises to the kinetochore. The protein resides in the spindle. It is found in the golgi apparatus. The protein localises to the trans-Golgi network. In terms of biological role, microtubule plus-end tracking protein that promotes the stabilization of dynamic microtubules. Involved in the nucleation of noncentrosomal microtubules originating from the trans-Golgi network (TGN). Required for the polarization of the cytoplasmic microtubule arrays in migrating cells towards the leading edge of the cell. May act at the cell cortex to enhance the frequency of rescue of depolymerizing microtubules by attaching their plus-ends to cortical platforms composed of ERC1 and PHLDB2. This cortical microtubule stabilizing activity is regulated at least in part by phosphatidylinositol 3-kinase signaling. Also performs a similar stabilizing function at the kinetochore which is essential for the bipolar alignment of chromosomes on the mitotic spindle. This is CLIP-associating protein 1 (Clasp1) from Mus musculus (Mouse).